Here is a 152-residue protein sequence, read N- to C-terminus: MVKAVAVLASSEGVKGTIFFSQEGDGPTSVTGSVSGLKPGLHGFHVHALGDTTNGCMSTGPHFNPTGKEHGAPQDENRHAGDLGNITAGADGVANVNVSDSQIPLTGAHSIIGRAVVVHADPDDLGKGGHELSKTTGNAGGRVACGIIGLQG.

Cu cation is bound by residues His-45, His-47, and His-62. Cysteines 56 and 145 form a disulfide. The Zn(2+) site is built by His-62, His-70, His-79, and Asp-82. His-119 is a binding site for Cu cation.

Belongs to the Cu-Zn superoxide dismutase family. In terms of assembly, homodimer. It depends on Cu cation as a cofactor. Zn(2+) serves as cofactor.

It localises to the cytoplasm. It carries out the reaction 2 superoxide + 2 H(+) = H2O2 + O2. Functionally, destroys radicals which are normally produced within the cells and which are toxic to biological systems. In Oryza sativa subsp. japonica (Rice), this protein is Superoxide dismutase [Cu-Zn] 2 (SODCC2).